We begin with the raw amino-acid sequence, 475 residues long: CAAX prenyl protease 1 homolog (475 aa).

The Lumenal segment spans residues 1–18; it reads MGMWASVDAMWDFPAEKR. Residues 19–39 traverse the membrane as a helical segment; that stretch reads IFGAVLLFSWTVYLWETFLAQ. Topologically, residues 40 to 81 are nuclear; that stretch reads RQRRIYKTTTRVPAELEQIMDSDTFEKSRLYQLDKSTFSFWS. The helical transmembrane segment at 82–102 threads the bilayer; sequence GLYSEVEGTFILLFGGIPYLW. The Lumenal portion of the chain corresponds to 103 to 123; it reads RLSGQFCSSAGFGPEYEIIQS. Residues 124–144 traverse the membrane as a helical segment; that stretch reads LVFLLLATLFSALTGLPWSLY. Residues 145–170 lie on the Nuclear side of the membrane; that stretch reads NTFVIEEKHGFNHQTLEFFMKDAIKK. The chain crosses the membrane as a helical span at residues 171 to 191; it reads FIVTQCILLPVSALLLYIIKI. Topologically, residues 192–195 are lumenal; the sequence is GGDY. The chain crosses the membrane as a helical span at residues 196–216; sequence FFIYAWLFTLVVSLVLVTIYA. Residues 217-347 lie on the Nuclear side of the membrane; sequence DYIAPLFDKF…GHWKLGHTVK (131 aa). The interval 293 to 314 is disordered; the sequence is DNQEESGMEARNEGEGDSEEVK. Residues 300 to 314 show a composition bias toward basic and acidic residues; sequence MEARNEGEGDSEEVK. Histidine 335 lines the Zn(2+) pocket. Residue glutamate 336 is part of the active site. Zn(2+) is bound at residue histidine 339. Residues 348-368 traverse the membrane as a helical segment; that stretch reads NIIISQMNSFLCFFLFAVLIG. Residues 369–382 are Lumenal-facing; that stretch reads RRELFAAFGFYDSQ. The chain crosses the membrane as a helical span at residues 383–405; it reads PTLIGLLIIFQFIFSPYNEVLSF. Residues 406–475 lie on the Nuclear side of the membrane; it reads CLTVLSRRFE…LQALKNAKQD (70 aa). Residue glutamate 415 coordinates Zn(2+).

This sequence belongs to the peptidase M48A family. It depends on Zn(2+) as a cofactor.

The protein resides in the endoplasmic reticulum membrane. It localises to the nucleus inner membrane. The protein localises to the early endosome membrane. It is found in the late endosome membrane. It carries out the reaction Hydrolyzes the peptide bond -P2-(S-farnesyl or geranylgeranyl)C-P1'-P2'-P3'-COOH where P1' and P2' are amino acids with aliphatic side chains and P3' is any C-terminal residue.. Inhibited by HIV protease inhibitors, such as lopinavir, tipranavir and nelfinavir, leading to defects in lamin A/LMNA maturation and accumulation of prelamin-A/C precursors in cells. This causes defects in nuclear envelope integrity and release of DNA in the cytosol, activating the AIM2 inflammasome. Functionally, transmembrane metalloprotease whose catalytic activity is critical for processing lamin A/LMNA on the inner nuclear membrane and clearing clogged translocons on the endoplasmic reticulum. Proteolytically removes the C-terminal three residues of farnesylated proteins. Also plays an antiviral role independently of its protease activity by restricting enveloped RNA and DNA viruses. Mechanistically, controls IFITM antiviral pathway to hinder viruses from breaching the endosomal barrier by modulating membrane fluidity. The protein is CAAX prenyl protease 1 homolog of Mus musculus (Mouse).